A 567-amino-acid chain; its full sequence is Platelet glycoprotein V (567 aa).

The first 16 residues, Met1–Ala16, serve as a signal peptide directing secretion. One can recognise an LRRNT domain in the interval Gln17 to Thr50. Residues Gln17 to Gly522 lie on the Extracellular side of the membrane. 2 N-linked (GlcNAc...) asparagine glycosylation sites follow: Asn51 and Asn67. LRR repeat units follow at residues Val75–Asp96, Lys99–Lys120, Leu123–Gln144, Asn147–Ser168, Glu171–Gln193, Lys195–Asn216, Ala219–Arg240, Asn243–His264, Ser267–Glu288, Gly291–Asn312, Gly315–Gly337, Glu340–Gly361, His364–Asn385, and Ser388–Ala409. A glycan (N-linked (GlcNAc...) asparagine) is linked at Asn181. Asn243 carries N-linked (GlcNAc...) asparagine glycosylation. N-linked (GlcNAc...) asparagine glycans are attached at residues Asn298 and Asn312. The N-linked (GlcNAc...) asparagine glycan is linked to Asn385. An LRRCT domain is found at Asn421–Asp474. Residues Leu523–Ile543 form a helical membrane-spanning segment. At Lys544–Asn567 the chain is on the cytoplasmic side.

It localises to the membrane. In terms of biological role, the GPIb-V-IX complex functions as the vWF receptor and mediates vWF-dependent platelet adhesion to blood vessels. The adhesion of platelets to injured vascular surfaces in the arterial circulation is a critical initiating event in hemostasis. This is Platelet glycoprotein V (Gp5) from Mus musculus (Mouse).